The chain runs to 183 residues: Ribonuclease H (183 aa).

The RNase H type-1 domain occupies 2–151 (SQARFIAFSD…VDQLAQAAAR (150 aa)). Asp11, Glu57, Asp79, and Asp143 together coordinate Mg(2+).

It belongs to the RNase H family. In terms of assembly, monomer. The cofactor is Mg(2+).

Its subcellular location is the cytoplasm. It catalyses the reaction Endonucleolytic cleavage to 5'-phosphomonoester.. Functionally, endonuclease that specifically degrades the RNA of RNA-DNA hybrids. This chain is Ribonuclease H, found in Anaeromyxobacter dehalogenans (strain 2CP-C).